An 87-amino-acid polypeptide reads, in one-letter code: Large ribosomal subunit protein bL27 (87 aa).

This sequence belongs to the bacterial ribosomal protein bL27 family.

The polypeptide is Large ribosomal subunit protein bL27 (Pseudarthrobacter chlorophenolicus (strain ATCC 700700 / DSM 12829 / CIP 107037 / JCM 12360 / KCTC 9906 / NCIMB 13794 / A6) (Arthrobacter chlorophenolicus)).